A 564-amino-acid chain; its full sequence is Dihydroxy-acid dehydratase (564 aa).

Cys-55 is a [2Fe-2S] cluster binding site. Asp-87 lines the Mg(2+) pocket. Cys-128 contributes to the [2Fe-2S] cluster binding site. Mg(2+) is bound by residues Asp-129 and Lys-130. N6-carboxylysine is present on Lys-130. Position 200 (Cys-200) interacts with [2Fe-2S] cluster. Residue Glu-452 coordinates Mg(2+). The Proton acceptor role is filled by Ser-478.

It belongs to the IlvD/Edd family. As to quaternary structure, homodimer. It depends on [2Fe-2S] cluster as a cofactor. The cofactor is Mg(2+).

It catalyses the reaction (2R)-2,3-dihydroxy-3-methylbutanoate = 3-methyl-2-oxobutanoate + H2O. The catalysed reaction is (2R,3R)-2,3-dihydroxy-3-methylpentanoate = (S)-3-methyl-2-oxopentanoate + H2O. It functions in the pathway amino-acid biosynthesis; L-isoleucine biosynthesis; L-isoleucine from 2-oxobutanoate: step 3/4. Its pathway is amino-acid biosynthesis; L-valine biosynthesis; L-valine from pyruvate: step 3/4. In terms of biological role, functions in the biosynthesis of branched-chain amino acids. Catalyzes the dehydration of (2R,3R)-2,3-dihydroxy-3-methylpentanoate (2,3-dihydroxy-3-methylvalerate) into 2-oxo-3-methylpentanoate (2-oxo-3-methylvalerate) and of (2R)-2,3-dihydroxy-3-methylbutanoate (2,3-dihydroxyisovalerate) into 2-oxo-3-methylbutanoate (2-oxoisovalerate), the penultimate precursor to L-isoleucine and L-valine, respectively. The protein is Dihydroxy-acid dehydratase of Polaromonas naphthalenivorans (strain CJ2).